Reading from the N-terminus, the 167-residue chain is Putative C-type lectin-like domain family 1 (167 aa).

Over 1 to 67 the chain is Cytoplasmic; the sequence is MVSNFFHVIQ…KYDCPFSGTS (67 aa). A helical; Signal-anchor for type II membrane protein transmembrane segment spans residues 68–88; sequence FVVFSLFLICAMAGDVVYADI. Topologically, residues 89 to 167 are extracellular; the sequence is KTVRTSPLEL…DITAMVRFNI (79 aa). N-linked (GlcNAc...) asparagine glycans are attached at residues N109, N140, and N149. One can recognise a C-type lectin; atypical domain in the interval 116–167; the sequence is SCPAKDWKVHKGKCYWIAETKKSWNKSQNDCAINNSYLMVIQDITAMVRFNI.

As to expression, expressed in spleen, lymph node, and tonsil. Lower expression in peripheral blood, bone marrow, and colon. No expression detected in thymus. Highly expressed in dendritic and B-cells.

Its subcellular location is the cell membrane. May function in mediating immune cell-cell interactions. May act as a T-cell costimulatory molecule, enhancing anti-CD3-induced proliferation. May play a role in the interaction of dendritic cells with T-cells and the cells of the adaptive immune response. The polypeptide is Putative C-type lectin-like domain family 1 (Homo sapiens (Human)).